The sequence spans 291 residues: Protein-export membrane protein SecF (291 aa).

6 helical membrane-spanning segments follow: residues 19–39 (LVVI…SWYV), 134–154 (LALG…FLMF), 156–176 (VFVP…ISVA), 187–209 (LGTV…LLNN), 226–246 (MRTG…MAAV), and 256–278 (AAIG…LLNL).

The protein belongs to the SecD/SecF family. SecF subfamily. Part of the protein translocation apparatus. Forms a complex with SecD.

It localises to the cell membrane. Involved in protein export. The polypeptide is Protein-export membrane protein SecF (Haloquadratum walsbyi (strain DSM 16790 / HBSQ001)).